The primary structure comprises 356 residues: Phospho-N-acetylmuramoyl-pentapeptide-transferase (356 aa).

A run of 10 helical transmembrane segments spans residues A27–L47, T73–L93, F97–L117, F138–V158, A165–N185, G195–A215, A232–F252, A258–V278, I284–V304, and K333–L353.

This sequence belongs to the glycosyltransferase 4 family. MraY subfamily. Mg(2+) is required as a cofactor.

It is found in the cell inner membrane. The catalysed reaction is UDP-N-acetyl-alpha-D-muramoyl-L-alanyl-gamma-D-glutamyl-meso-2,6-diaminopimeloyl-D-alanyl-D-alanine + di-trans,octa-cis-undecaprenyl phosphate = di-trans,octa-cis-undecaprenyl diphospho-N-acetyl-alpha-D-muramoyl-L-alanyl-D-glutamyl-meso-2,6-diaminopimeloyl-D-alanyl-D-alanine + UMP. It functions in the pathway cell wall biogenesis; peptidoglycan biosynthesis. Functionally, catalyzes the initial step of the lipid cycle reactions in the biosynthesis of the cell wall peptidoglycan: transfers peptidoglycan precursor phospho-MurNAc-pentapeptide from UDP-MurNAc-pentapeptide onto the lipid carrier undecaprenyl phosphate, yielding undecaprenyl-pyrophosphoryl-MurNAc-pentapeptide, known as lipid I. This is Phospho-N-acetylmuramoyl-pentapeptide-transferase from Erythrobacter litoralis (strain HTCC2594).